A 473-amino-acid chain; its full sequence is Siroheme synthase (473 aa).

Residues 1-222 (MNTQPHHSSP…GDESRADARL (222 aa)) form a precorrin-2 dehydrogenase /sirohydrochlorin ferrochelatase region. NAD(+) contacts are provided by residues 37-38 (EI) and 58-59 (EK). The uroporphyrinogen-III C-methyltransferase stretch occupies residues 233–473 (GEVWLVGAGP…QVVRHRVVSP (241 aa)). Proline 242 is an S-adenosyl-L-methionine binding site. The active-site Proton acceptor is aspartate 265. Lysine 287 serves as the catalytic Proton donor. Residues 318 to 320 (GGD), isoleucine 323, 348 to 349 (SA), methionine 401, and glycine 430 each bind S-adenosyl-L-methionine.

The protein in the N-terminal section; belongs to the precorrin-2 dehydrogenase / sirohydrochlorin ferrochelatase family. In the C-terminal section; belongs to the precorrin methyltransferase family.

The enzyme catalyses uroporphyrinogen III + 2 S-adenosyl-L-methionine = precorrin-2 + 2 S-adenosyl-L-homocysteine + H(+). The catalysed reaction is precorrin-2 + NAD(+) = sirohydrochlorin + NADH + 2 H(+). It catalyses the reaction siroheme + 2 H(+) = sirohydrochlorin + Fe(2+). The protein operates within cofactor biosynthesis; adenosylcobalamin biosynthesis; precorrin-2 from uroporphyrinogen III: step 1/1. It participates in cofactor biosynthesis; adenosylcobalamin biosynthesis; sirohydrochlorin from precorrin-2: step 1/1. It functions in the pathway porphyrin-containing compound metabolism; siroheme biosynthesis; precorrin-2 from uroporphyrinogen III: step 1/1. Its pathway is porphyrin-containing compound metabolism; siroheme biosynthesis; siroheme from sirohydrochlorin: step 1/1. The protein operates within porphyrin-containing compound metabolism; siroheme biosynthesis; sirohydrochlorin from precorrin-2: step 1/1. Multifunctional enzyme that catalyzes the SAM-dependent methylations of uroporphyrinogen III at position C-2 and C-7 to form precorrin-2 via precorrin-1. Then it catalyzes the NAD-dependent ring dehydrogenation of precorrin-2 to yield sirohydrochlorin. Finally, it catalyzes the ferrochelation of sirohydrochlorin to yield siroheme. This chain is Siroheme synthase, found in Gluconobacter oxydans (strain 621H) (Gluconobacter suboxydans).